We begin with the raw amino-acid sequence, 805 residues long: Zinc finger CCCH domain-containing protein 11B (805 aa).

C3H1-type zinc fingers lie at residues 2–29 and 31–57; these read PNQG…HCEA and LGNE…HMEI. Disordered stretches follow at residues 140-194, 223-351, 364-433, 449-468, 481-506, and 715-805; these read KVES…GLRV, KKMK…DKVN, MLLE…TCIK, IVAS…SMQE, KALR…PGAR, and VTVP…PLEL. The segment covering 160-175 has biased composition (acidic residues); sequence ADDDEDDDDQFSEEGD. Positions 364 to 390 are enriched in basic and acidic residues; it reads MLLERASQKHGESQTKLKTEGPSKTDD. Polar residues predominate over residues 391 to 402; the sequence is STSGARSSSTIR. The stretch at 403 to 423 forms a coiled coil; the sequence is IKTFSEVLAEEEHRQQEAERQ. Composition is skewed to basic and acidic residues over residues 412–433 and 455–468; these read EEEH…TCIK and QSEE…SMQE. Low complexity-rich tracts occupy residues 486–498 and 730–749; these read QQSS…SPSQ and PPTQ…PSSS. Polar residues predominate over residues 750 to 763; it reads QMSMKTRRLSSAST. Acidic residues predominate over residues 789 to 805; sequence EIDLDPGKDEDDLPLEL.

Its function is as follows. May play a role in mRNA transport. The protein is Zinc finger CCCH domain-containing protein 11B of Homo sapiens (Human).